We begin with the raw amino-acid sequence, 273 residues long: Putative pyruvate, phosphate dikinase regulatory protein (273 aa).

Gly-149–Thr-156 is an ADP binding site.

This sequence belongs to the pyruvate, phosphate/water dikinase regulatory protein family. PDRP subfamily.

It carries out the reaction N(tele)-phospho-L-histidyl/L-threonyl-[pyruvate, phosphate dikinase] + ADP = N(tele)-phospho-L-histidyl/O-phospho-L-threonyl-[pyruvate, phosphate dikinase] + AMP + H(+). The enzyme catalyses N(tele)-phospho-L-histidyl/O-phospho-L-threonyl-[pyruvate, phosphate dikinase] + phosphate + H(+) = N(tele)-phospho-L-histidyl/L-threonyl-[pyruvate, phosphate dikinase] + diphosphate. Its function is as follows. Bifunctional serine/threonine kinase and phosphorylase involved in the regulation of the pyruvate, phosphate dikinase (PPDK) by catalyzing its phosphorylation/dephosphorylation. The chain is Putative pyruvate, phosphate dikinase regulatory protein from Rickettsia canadensis (strain McKiel).